Reading from the N-terminus, the 203-residue chain is Peptidyl-tRNA hydrolase (203 aa).

Position 16 (Tyr-16) interacts with tRNA. His-21 functions as the Proton acceptor in the catalytic mechanism. TRNA is bound by residues Tyr-68, Asn-70, and Asn-116.

This sequence belongs to the PTH family. As to quaternary structure, monomer.

Its subcellular location is the cytoplasm. It catalyses the reaction an N-acyl-L-alpha-aminoacyl-tRNA + H2O = an N-acyl-L-amino acid + a tRNA + H(+). Its function is as follows. Hydrolyzes ribosome-free peptidyl-tRNAs (with 1 or more amino acids incorporated), which drop off the ribosome during protein synthesis, or as a result of ribosome stalling. Functionally, catalyzes the release of premature peptidyl moieties from peptidyl-tRNA molecules trapped in stalled 50S ribosomal subunits, and thus maintains levels of free tRNAs and 50S ribosomes. This is Peptidyl-tRNA hydrolase from Nostoc sp. (strain PCC 7120 / SAG 25.82 / UTEX 2576).